Here is a 124-residue protein sequence, read N- to C-terminus: Fluoride-specific ion channel FluC (124 aa).

The next 4 membrane-spanning stretches (helical) occupy residues 1–21 (MIGV…LRFA), 34–54 (FYAA…YLYG), 62–82 (VPLA…TTFS), and 101–121 (FSYL…GLIL). The Na(+) site is built by Gly-76 and Thr-79.

It belongs to the fluoride channel Fluc/FEX (TC 1.A.43) family.

The protein resides in the cell inner membrane. The enzyme catalyses fluoride(in) = fluoride(out). With respect to regulation, na(+) is not transported, but it plays an essential structural role and its presence is essential for fluoride channel function. Its function is as follows. Fluoride-specific ion channel. Important for reducing fluoride concentration in the cell, thus reducing its toxicity. This Azotobacter vinelandii (strain DJ / ATCC BAA-1303) protein is Fluoride-specific ion channel FluC.